The chain runs to 65 residues: MAEVKLQEGESLENALRRFKRKVQQEDIIKEVKRHSFYLKPGEKKRVKEALARKRSRKKARKEQD.

The span at 43–52 shows a compositional bias: basic and acidic residues; it reads EKKRVKEALA. The disordered stretch occupies residues 43–65; the sequence is EKKRVKEALARKRSRKKARKEQD. The segment covering 53-65 has biased composition (basic residues); that stretch reads RKRSRKKARKEQD.

It belongs to the bacterial ribosomal protein bS21 family.

The sequence is that of Small ribosomal subunit protein bS21 from Koribacter versatilis (strain Ellin345).